Reading from the N-terminus, the 226-residue chain is Ribonuclease 3 (226 aa).

One can recognise an RNase III domain in the interval 6–128 (INRLQRKLGY…LIGGVFLDSD (123 aa)). Residue glutamate 41 coordinates Mg(2+). The active site involves aspartate 45. The Mg(2+) site is built by aspartate 114 and glutamate 117. Glutamate 117 is a catalytic residue. Residues 155 to 225 (DPKTRLQEYL…AEQALKQLEL (71 aa)) enclose the DRBM domain.

Belongs to the ribonuclease III family. Homodimer. Mg(2+) is required as a cofactor.

Its subcellular location is the cytoplasm. It catalyses the reaction Endonucleolytic cleavage to 5'-phosphomonoester.. Functionally, digests double-stranded RNA. Involved in the processing of primary rRNA transcript to yield the immediate precursors to the large and small rRNAs (23S and 16S). Processes some mRNAs, and tRNAs when they are encoded in the rRNA operon. Processes pre-crRNA and tracrRNA of type II CRISPR loci if present in the organism. This is Ribonuclease 3 from Yersinia pseudotuberculosis serotype O:1b (strain IP 31758).